The primary structure comprises 401 residues: Voltage-gated potassium channel subunit beta-1 (401 aa).

Residues T90, W91, Q97, and D119 each coordinate NADP(+). The active-site Proton donor/acceptor is the Y124. The NADP(+) site is built by N192, S222, R223, Q248, W277, S278, P279, L280, A281, C282, K288, R298, G357, S359, Q363, E366, and N367.

It belongs to the shaker potassium channel beta subunit family. As to quaternary structure, homotetramer. Interaction with tetrameric potassium channel alpha subunits gives rise to a heterooctamer.

The protein resides in the cytoplasm. Its subcellular location is the membrane. The protein localises to the cell membrane. The enzyme catalyses a primary alcohol + NADP(+) = an aldehyde + NADPH + H(+). The catalysed reaction is a secondary alcohol + NADP(+) = a ketone + NADPH + H(+). Its function is as follows. Regulatory subunit of the voltage-gated potassium (Kv) channels composed of pore-forming and potassium-conducting alpha subunits and of regulatory beta subunits. The beta-1/KCNAB1 cytoplasmic subunit mediates closure of delayed rectifier potassium channels by physically obstructing the pore via its N-terminal domain and increases the speed of channel closure for other family members. Promotes the inactivation of KCNA1, KCNA2, KCNA4, KCNA5 and KCNA6 alpha subunit-containing channels. Displays nicotinamide adenine dinucleotide phosphate (NADPH)-dependent aldoketoreductase activity by catalyzing the NADPH-dependent reduction of a variety of endogenous aldehydes and ketones. The binding of NADPH is required for efficient down-regulation of potassium channel activity. Oxidation of the bound NADPH restrains N-terminal domain from blocking the channel, thereby decreasing N-type inactivation of potassium channel activity. The sequence is that of Voltage-gated potassium channel subunit beta-1 (KCNAB1) from Gallus gallus (Chicken).